A 216-amino-acid chain; its full sequence is Octanoyltransferase (216 aa).

The BPL/LPL catalytic domain occupies Asp-29 to Pro-209. Residues Arg-68–His-75, Ala-140–Gly-142, and Gly-153–Ala-155 each bind substrate. Residue Cys-171 is the Acyl-thioester intermediate of the active site.

This sequence belongs to the LipB family.

Its subcellular location is the cytoplasm. The enzyme catalyses octanoyl-[ACP] + L-lysyl-[protein] = N(6)-octanoyl-L-lysyl-[protein] + holo-[ACP] + H(+). It participates in protein modification; protein lipoylation via endogenous pathway; protein N(6)-(lipoyl)lysine from octanoyl-[acyl-carrier-protein]: step 1/2. Functionally, catalyzes the transfer of endogenously produced octanoic acid from octanoyl-acyl-carrier-protein onto the lipoyl domains of lipoate-dependent enzymes. Lipoyl-ACP can also act as a substrate although octanoyl-ACP is likely to be the physiological substrate. The protein is Octanoyltransferase of Rhodospirillum rubrum (strain ATCC 11170 / ATH 1.1.1 / DSM 467 / LMG 4362 / NCIMB 8255 / S1).